We begin with the raw amino-acid sequence, 204 residues long: Putative rubrerythrin (204 aa).

One can recognise a Ferritin-like diiron domain in the interval 1–159; sequence MINNFFVINM…KLLKEVEEGT (159 aa). 10 residues coordinate Fe(3+): glutamate 24, glutamate 57, glutamate 107, glutamate 110, glutamate 141, histidine 144, cysteine 171, cysteine 174, cysteine 187, and cysteine 190. Residues 166–204 enclose the Rubredoxin-like domain; sequence PVEWVCRKCGFVHLGKEPPEKCPSCSHPRKYFEVKCEKY.

As to quaternary structure, homodimer. Possesses two rubredoxin-like centers and two non-sulfur oxo-bridged di-iron centers per dimer. The cofactor is Fe(3+).

Its subcellular location is the cytoplasm. In terms of biological role, may provide oxidative stress protection via catalytic reduction of intracellular hydrogen peroxide. This Methanocaldococcus jannaschii (strain ATCC 43067 / DSM 2661 / JAL-1 / JCM 10045 / NBRC 100440) (Methanococcus jannaschii) protein is Putative rubrerythrin.